The chain runs to 359 residues: NADH-quinone oxidoreductase subunit H (359 aa).

8 consecutive transmembrane segments (helical) span residues 19–39, 94–114, 127–147, 166–186, 202–222, 266–286, 301–321, and 337–357; these read IGWF…FIAL, FLFV…FAVL, VGLF…LAAG, IVSY…LAGT, FMHW…IYFI, MFMV…SPLP, VWGA…QMWL, and CWKV…IWVI.

Belongs to the complex I subunit 1 family. In terms of assembly, NDH-1 is composed of 14 different subunits. Subunits NuoA, H, J, K, L, M, N constitute the membrane sector of the complex.

The protein resides in the cell inner membrane. The catalysed reaction is a quinone + NADH + 5 H(+)(in) = a quinol + NAD(+) + 4 H(+)(out). In terms of biological role, NDH-1 shuttles electrons from NADH, via FMN and iron-sulfur (Fe-S) centers, to quinones in the respiratory chain. The immediate electron acceptor for the enzyme in this species is believed to be ubiquinone. Couples the redox reaction to proton translocation (for every two electrons transferred, four hydrogen ions are translocated across the cytoplasmic membrane), and thus conserves the redox energy in a proton gradient. This subunit may bind ubiquinone. The polypeptide is NADH-quinone oxidoreductase subunit H (Chlorobaculum parvum (strain DSM 263 / NCIMB 8327) (Chlorobium vibrioforme subsp. thiosulfatophilum)).